Consider the following 222-residue polypeptide: MADS-box transcription factor 26 (222 aa).

In terms of domain architecture, MADS-box spans 1-61; it reads MARGKVQLRR…GKLYDLATTG (61 aa). Positions 85–176 constitute a K-box domain; that stretch reads RMDPKQEAMV…QEKIVEQNGL (92 aa).

It localises to the nucleus. In terms of biological role, probable transcription factor. The polypeptide is MADS-box transcription factor 26 (MADS26) (Oryza sativa subsp. indica (Rice)).